Reading from the N-terminus, the 479-residue chain is Sodium-coupled neutral amino acid transporter 5 (479 aa).

Topologically, residues 1-61 (MAISCAVGME…LDFEGKTSFG (61 aa)) are cytoplasmic. A helical membrane pass occupies residues 62 to 84 (MSVFNLSNAIMGSGILGLAYAMA). The Extracellular segment spans residues 85–97 (HTGVIFFLALLLC). The chain crosses the membrane as a helical span at residues 98-118 (IALLSSYSIHLLLTCASVVGI). Residues 119–135 (RAYEQLGQRAFGPAGKV) are Cytoplasmic-facing. Residues 136 to 156 (VVAIIICLHNVGAMSSYLFII) form a helical membrane-spanning segment. At 157-176 (KSELPLVIGTFLHMDPEGDW) the chain is on the extracellular side. A helical membrane pass occupies residues 177–197 (FLKGNLLIILVSLLIILPLAL). Residues 198 to 202 (MKHLG) lie on the Cytoplasmic side of the membrane. The chain crosses the membrane as a helical span at residues 203-223 (YLGYTSSLSLTCMLFFLISVI). The Extracellular segment spans residues 224 to 264 (YKKFQIGCDVSHNDTVVEAEQAPLQAFNSSCEAELFTVDSQ). Cys-231 and Cys-254 are joined by a disulfide. Asn-236 is a glycosylation site (N-linked (GlcNAc...) asparagine). A helical membrane pass occupies residues 265-285 (MSYTVPIMAFAFVCHPEVLPI). The Cytoplasmic segment spans residues 286–302 (YTELCRPTQRRMQAVAN). The helical transmembrane segment at 303-323 (MSIGAMFIMYGLTATFGYLTF) threads the bilayer. Over 324 to 341 (YSTVKAEMLEMYTQEDML) the chain is Extracellular. The helical transmembrane segment at 342–362 (ILCVRLAVLLAVTLTVPVVLF) threads the bilayer. At 363-383 (PIRRALQQLLFPSKAFSWLRH) the chain is on the cytoplasmic side. A helical membrane pass occupies residues 384–404 (VAIALILLILVNILVICVPTI). Residues 405–406 (RD) are Extracellular-facing. Residues 407-427 (IFGFIGSTSAPSLIFILPSVF) form a helical membrane-spanning segment. The Cytoplasmic segment spans residues 428–446 (YLRIVPTEVEPLFSWPKIQ). Residues 447 to 467 (ALCFGVLGVLFMAISLGFMFA) traverse the membrane as a helical segment. Topologically, residues 468–479 (NWATGQSRMSGH) are extracellular.

It belongs to the amino acid/polyamine transporter 2 family. As to expression, expressed in the ganglion cell layer and the nerve fiber layer (at protein level). Also expreseed in the cells of the inner nuclear layer and in the inner plexiform layer (at protein level). Expressed in Mueller and ganglion retinal cell.

The protein localises to the cell membrane. It carries out the reaction L-glutamine(out) + Na(+)(out) + H(+)(in) = L-glutamine(in) + Na(+)(in) + H(+)(out). The enzyme catalyses L-serine(out) + Na(+)(out) + H(+)(in) = L-serine(in) + Na(+)(in) + H(+)(out). The catalysed reaction is L-alanine(out) + Na(+)(out) + H(+)(in) = L-alanine(in) + Na(+)(in) + H(+)(out). It catalyses the reaction glycine(out) + Na(+)(out) + H(+)(in) = glycine(in) + Na(+)(in) + H(+)(out). It carries out the reaction L-asparagine(out) + Na(+)(out) + H(+)(in) = L-asparagine(in) + Na(+)(in) + H(+)(out). The enzyme catalyses L-histidine(out) + Na(+)(out) + H(+)(in) = L-histidine(in) + Na(+)(in) + H(+)(out). The catalysed reaction is L-cysteine(out) + Na(+)(out) + H(+)(in) = L-cysteine(in) + Na(+)(in) + H(+)(out). With respect to regulation, not inhibited by lithium. Partial allosteric regulation on ions sodium binding. Its function is as follows. Symporter that cotransports neutral amino acids and sodium ions, coupled to an H(+) antiporter activity. Releases L-glutamine and glycine from astroglial cells and may participate in the glutamate/GABA-L-glutamine cycle and the NMDA receptors activation. In addition, contributes significantly to L-glutamine uptake in retina, namely in ganglion and Mueller cells therefore, participates in the retinal glutamate-glutamine cycle. The transport activity is pH sensitive, Li(+) tolerant, bidirectional and associated with large uncoupled fluxes of protons. Moreover functions in both direction and is associated with large uncoupled fluxes of protons. The transport is electroneutral coupled to the cotransport of 1 Na(+) and the antiport of 1 H(+). May have a particular importance for modulation of net hepatic glutamine flux. In Mus musculus (Mouse), this protein is Sodium-coupled neutral amino acid transporter 5.